A 141-amino-acid chain; its full sequence is Large ribosomal subunit protein uL11 (141 aa).

Belongs to the universal ribosomal protein uL11 family. Part of the ribosomal stalk of the 50S ribosomal subunit. Interacts with L10 and the large rRNA to form the base of the stalk. L10 forms an elongated spine to which L12 dimers bind in a sequential fashion forming a multimeric L10(L12)X complex. In terms of processing, one or more lysine residues are methylated.

Forms part of the ribosomal stalk which helps the ribosome interact with GTP-bound translation factors. This is Large ribosomal subunit protein uL11 from Chlorobium chlorochromatii (strain CaD3).